The chain runs to 394 residues: Methylthioribose kinase (394 aa).

Residues Asn44, Lys61, and 115 to 117 (EDL) contribute to the ATP site. Position 233 (Asp233) interacts with substrate. 250–252 (DPE) is a binding site for ATP. A substrate-binding site is contributed by Arg337.

Belongs to the methylthioribose kinase family. Homodimer.

The enzyme catalyses 5-(methylsulfanyl)-D-ribose + ATP = 5-(methylsulfanyl)-alpha-D-ribose 1-phosphate + ADP + H(+). Its pathway is amino-acid biosynthesis; L-methionine biosynthesis via salvage pathway; S-methyl-5-thio-alpha-D-ribose 1-phosphate from S-methyl-5'-thioadenosine (hydrolase route): step 2/2. Functionally, catalyzes the phosphorylation of methylthioribose into methylthioribose-1-phosphate. This Bacillus velezensis (strain DSM 23117 / BGSC 10A6 / LMG 26770 / FZB42) (Bacillus amyloliquefaciens subsp. plantarum) protein is Methylthioribose kinase.